A 98-amino-acid chain; its full sequence is Conotoxin Di19A (98 aa).

Residues 1–19 (MSTLGILLPIALLLPLANP) form the signal peptide. A propeptide spanning residues 20–49 (AENGDGQAMPRTRNLRSLSFGRTLRRLEKR) is cleaved from the precursor. Position 53 is a 4-hydroxyproline (Pro53). Position 63 is a 4-carboxyglutamate (Glu63). Residues Pro68, Pro93, and Pro97 each carry the 4-hydroxyproline modification.

Contains 5 disulfide bonds. As to expression, expressed by the venom duct.

The protein localises to the secreted. Injection of the synthetic peptide causes a hyperexcitable phenotype in mice greater than three weeks of age at lower doses, and lethargy at higher doses. This chain is Conotoxin Di19A, found in Conus distans (Distant cone).